Reading from the N-terminus, the 716-residue chain is DNA ligase (716 aa).

Residues 49–53 (DAAYD), 98–99 (SL), and Glu-132 contribute to the NAD(+) site. The active-site N6-AMP-lysine intermediate is the Lys-134. Residues Arg-155, Glu-192, Lys-308, and Lys-332 each coordinate NAD(+). Residues Cys-437, Cys-439, Cys-461, and Cys-467 each contribute to the Zn(2+) site. The BRCT domain maps to 638 to 716 (KRNSPIATKT…EDEWLQLIGE (79 aa)).

This sequence belongs to the NAD-dependent DNA ligase family. LigA subfamily. Mg(2+) is required as a cofactor. It depends on Mn(2+) as a cofactor.

It catalyses the reaction NAD(+) + (deoxyribonucleotide)n-3'-hydroxyl + 5'-phospho-(deoxyribonucleotide)m = (deoxyribonucleotide)n+m + AMP + beta-nicotinamide D-nucleotide.. Functionally, DNA ligase that catalyzes the formation of phosphodiester linkages between 5'-phosphoryl and 3'-hydroxyl groups in double-stranded DNA using NAD as a coenzyme and as the energy source for the reaction. It is essential for DNA replication and repair of damaged DNA. The protein is DNA ligase of Bradyrhizobium sp. (strain ORS 278).